The sequence spans 449 residues: Pectate lyase L (449 aa).

The first 26 residues, 1-26, serve as a signal peptide directing secretion; that stretch reads MFKRNDRSKNGFNALRLGVSFVLASS. A lipid anchor (N-palmitoyl cysteine) is attached at Cys-27. Residue Cys-27 is the site of S-diacylglycerol cysteine attachment. PbH1 repeat units lie at residues 158–179, 180–202, 213–242, 245–267, 274–308, 336–358, and 359–391; these read GDFWLVKGLEVKGAGDNGIYIG, GSNNRIENVETHHNRDTGLQLGR, PANNLILNSYSHDNADPDNGEDADGFAAKL, GSGNVFDNCLAAYNVDDGWDLYS, IGAVTILNSVAHHNGQTSDGTSTANSDGNGFKLGG, PGTITLTNNTSWDNGQSNFAFDK, and GEHVFINNLSFEGTASDKTSGTDQDNSNVWWKN. The Ca(2+) site is built by Asp-236, Asp-260, Asp-261, and Asp-264. The Proton acceptor role is filled by Lys-305.

Belongs to the polysaccharide lyase 9 family. Ca(2+) is required as a cofactor.

It is found in the secreted. It carries out the reaction Eliminative cleavage of (1-&gt;4)-alpha-D-galacturonan to give oligosaccharides with 4-deoxy-alpha-D-galact-4-enuronosyl groups at their non-reducing ends.. Its activity is regulated as follows. Activated in presence of the surfactant polysorbate 20, while inhibited in the presence of polysorbate 40, polysorbate 60, polysorbate 80, Triton X-100 and sodium dodecyl sulfate. Inhibited by the metal chelator ethylenediaminetetraacetic acid (EDTA). Inhibited by iron and cobalt ions. Its function is as follows. Presents an endo-cleaving activity on the homogalacturonan (HG) region in pectin with a preference for low- or unmethylated pectin. This Paenibacillus polymyxa (strain SC2) (Bacillus polymyxa) protein is Pectate lyase L.